Consider the following 361-residue polypeptide: Dihydroorotate dehydrogenase (quinone) (361 aa).

Residues 67-71 (AGLDK) and T91 each bind FMN. K71 is a binding site for substrate. 116-120 (NRMGF) lines the substrate pocket. Positions 145 and 178 each coordinate FMN. N178 is a substrate binding site. The Nucleophile role is filled by S181. Residue N183 participates in substrate binding. Positions 223 and 251 each coordinate FMN. 252–253 (NT) contributes to the substrate binding site. Residues G273, G302, and 323–324 (YT) each bind FMN.

The protein belongs to the dihydroorotate dehydrogenase family. Type 2 subfamily. In terms of assembly, monomer. Requires FMN as cofactor.

The protein localises to the cell membrane. It carries out the reaction (S)-dihydroorotate + a quinone = orotate + a quinol. The protein operates within pyrimidine metabolism; UMP biosynthesis via de novo pathway; orotate from (S)-dihydroorotate (quinone route): step 1/1. Functionally, catalyzes the conversion of dihydroorotate to orotate with quinone as electron acceptor. The protein is Dihydroorotate dehydrogenase (quinone) of Deinococcus geothermalis (strain DSM 11300 / CIP 105573 / AG-3a).